Here is a 476-residue protein sequence, read N- to C-terminus: tRNA(Ile)-lysidine synthase (476 aa).

30–35 (SGGPDS) contacts ATP.

Belongs to the tRNA(Ile)-lysidine synthase family.

It is found in the cytoplasm. It carries out the reaction cytidine(34) in tRNA(Ile2) + L-lysine + ATP = lysidine(34) in tRNA(Ile2) + AMP + diphosphate + H(+). Ligates lysine onto the cytidine present at position 34 of the AUA codon-specific tRNA(Ile) that contains the anticodon CAU, in an ATP-dependent manner. Cytidine is converted to lysidine, thus changing the amino acid specificity of the tRNA from methionine to isoleucine. The polypeptide is tRNA(Ile)-lysidine synthase (Bacillus thuringiensis subsp. konkukian (strain 97-27)).